The primary structure comprises 316 residues: Spermidine synthase (316 aa).

Positions 25 to 262 constitute a PABS domain; the sequence is PGWFSEISPM…GVIGFMLCST (238 aa). Gln56 contacts S-adenosyl 3-(methylsulfanyl)propylamine. Residue Tyr86 participates in putrescine binding. S-adenosyl 3-(methylsulfanyl)propylamine contacts are provided by residues Gln87, Asp111, Glu131, 162–163, and Asp181; that span reads DG. The Proton acceptor role is filled by Asp181. Putrescine contacts are provided by residues 181 to 184 and Tyr250; that span reads DSSD.

It belongs to the spermidine/spermine synthase family.

It carries out the reaction S-adenosyl 3-(methylsulfanyl)propylamine + putrescine = S-methyl-5'-thioadenosine + spermidine + H(+). It participates in amine and polyamine biosynthesis; spermidine biosynthesis; spermidine from putrescine: step 1/1. The protein is Spermidine synthase of Coffea arabica (Arabian coffee).